The sequence spans 431 residues: Protein CLT2, chloroplastic (431 aa).

Residues 1–79 (MDTVLMATTP…PMRRPRFSVG (79 aa)) constitute a chloroplast transit peptide. The next 10 helical transmembrane spans lie at 99–119 (VVIV…LVPM), 122–142 (YPFF…FTIL), 163–183 (FAII…AAAM), 188–208 (VIPI…LLIL), 212–232 (FLLN…VAVS), 244–264 (IGFL…GASI), 284–304 (IFVV…LLLP), 343–363 (ILPL…LHLV), 365–385 (ISSA…AVYI), and 403–423 (FTMG…PTTP).

It belongs to the CRT-like transporter family.

The protein localises to the plastid. Its subcellular location is the chloroplast membrane. Functionally, involved in thiol transport from the plastid to the cytosol. Transports probably both glutathione (GSH) and its precursor, gamma-glutamylcysteine (gamma-EC). This is Protein CLT2, chloroplastic from Arabidopsis thaliana (Mouse-ear cress).